We begin with the raw amino-acid sequence, 564 residues long: Probable lysosomal cobalamin transporter (564 aa).

The next 9 helical transmembrane spans lie at 8–28 (LIWSVYGVAIAILIAVASTFI), 41–61 (VTLICIISITVLLATVLLLPV), 94–114 (TIVYYSLYTVDALLCLIGIPF), 144–164 (YTLFFVAILIVLFLVGFFIPT), 188–208 (ALTFSVGILTTLGLSLYIIYT), 312–332 (LLAGFVLLLAALFLWTSLCVT), 375–395 (VIFTLIVLFLFCSSVVGIAAF), 418–438 (LLLTSMLMLITLALNYSVAVI), and 506–526 (FFGAVFFWAQFIFLGLYLLVL).

Belongs to the LIMR family. LMBRD1 subfamily.

It is found in the lysosome membrane. Functionally, probable lysosomal cobalamin transporter. Required to export cobalamin from lysosomes allowing its conversion to cofactors. The protein is Probable lysosomal cobalamin transporter of Aspergillus clavatus (strain ATCC 1007 / CBS 513.65 / DSM 816 / NCTC 3887 / NRRL 1 / QM 1276 / 107).